The primary structure comprises 525 residues: NAD(P)H-quinone oxidoreductase chain 4-2 (525 aa).

Helical transmembrane passes span 6–26 (FPWL…IPII), 36–56 (WYAL…FYTS), 91–111 (LIIL…PVTL), 115–135 (LFYF…AVQD), 137–157 (LLFF…LAIW), 169–189 (FILY…TMAF), 212–232 (LLLY…IPLH), 243–263 (TAPA…YALI), 277–297 (FAPV…LTSF), 314–334 (MGFV…GAVL), 335–355 (QMVS…ATYD), 375–397 (IFAM…GFVA), 417–437 (VIVV…LLSM), and 464–484 (VFVI…PKLL).

This sequence belongs to the complex I subunit 4 family.

The protein resides in the cellular thylakoid membrane. The enzyme catalyses a plastoquinone + NADH + (n+1) H(+)(in) = a plastoquinol + NAD(+) + n H(+)(out). The catalysed reaction is a plastoquinone + NADPH + (n+1) H(+)(in) = a plastoquinol + NADP(+) + n H(+)(out). In terms of biological role, NDH-1 shuttles electrons from NAD(P)H, via FMN and iron-sulfur (Fe-S) centers, to quinones in the respiratory chain. The immediate electron acceptor for the enzyme in this species is believed to be plastoquinone. Couples the redox reaction to proton translocation (for every two electrons transferred, four hydrogen ions are translocated across the cytoplasmic membrane), and thus conserves the redox energy in a proton gradient. The polypeptide is NAD(P)H-quinone oxidoreductase chain 4-2 (ndhD2) (Nostoc sp. (strain PCC 7120 / SAG 25.82 / UTEX 2576)).